A 101-amino-acid polypeptide reads, in one-letter code: Small ribosomal subunit protein uS14 (101 aa).

It belongs to the universal ribosomal protein uS14 family. Part of the 30S ribosomal subunit. Contacts proteins S3 and S10.

Its function is as follows. Binds 16S rRNA, required for the assembly of 30S particles and may also be responsible for determining the conformation of the 16S rRNA at the A site. The protein is Small ribosomal subunit protein uS14 of Aromatoleum aromaticum (strain DSM 19018 / LMG 30748 / EbN1) (Azoarcus sp. (strain EbN1)).